The following is a 263-amino-acid chain: 3-methyl-2-oxobutanoate hydroxymethyltransferase (263 aa).

Residues Asp45 and Asp84 each coordinate Mg(2+). Residues 45 to 46, Asp84, and Lys112 each bind 3-methyl-2-oxobutanoate; that span reads DS. Glu114 contacts Mg(2+). The Proton acceptor role is filled by Glu180.

Belongs to the PanB family. As to quaternary structure, homodecamer; pentamer of dimers. Mg(2+) serves as cofactor.

It localises to the cytoplasm. It catalyses the reaction 3-methyl-2-oxobutanoate + (6R)-5,10-methylene-5,6,7,8-tetrahydrofolate + H2O = 2-dehydropantoate + (6S)-5,6,7,8-tetrahydrofolate. The protein operates within cofactor biosynthesis; (R)-pantothenate biosynthesis; (R)-pantoate from 3-methyl-2-oxobutanoate: step 1/2. Functionally, catalyzes the reversible reaction in which hydroxymethyl group from 5,10-methylenetetrahydrofolate is transferred onto alpha-ketoisovalerate to form ketopantoate. The sequence is that of 3-methyl-2-oxobutanoate hydroxymethyltransferase from Enterobacter sp. (strain 638).